The primary structure comprises 292 residues: Chondroitin proteoglycan 3 (292 aa).

A signal peptide spans 1-17; that stretch reads MRFVFIIALLLIGASLA. The segment at 28–103 is disordered; that stretch reads DVSASEDEFS…EGSGDTSPVV (76 aa). Positions 38 to 80 are enriched in low complexity; the sequence is GDSSGEISGESSGEASGEASGEASGEASGEASGESSGETSGES. A compositionally biased stretch (acidic residues) spans 81 to 96; sequence SGDEETSGEGSGEEGS. N174 and N254 each carry an N-linked (GlcNAc...) asparagine glycan.

This is Chondroitin proteoglycan 3 from Caenorhabditis elegans.